Here is a 608-residue protein sequence, read N- to C-terminus: Zinc finger protein 652 (608 aa).

Residue Ser-57 is modified to Phosphoserine. Residues 61–232 form a disordered region; sequence VLADTKMSKP…KRATKEAKAP (172 aa). Positions 71 to 97 are enriched in basic and acidic residues; sequence HLHETEEQPYFREPRAVSDVHTVKEDR. Acidic residues-rich tracts occupy residues 98–108 and 151–162; these read ENSDDTEEEEE and EEDEEETEEEAT. Ser-100 bears the Phosphoserine mark. Thr-103 bears the Phosphothreonine mark. A compositionally biased stretch (low complexity) spans 194–208; that stretch reads AASAAAATTSPAPRT. A phosphoserine mark is found at Ser-196 and Ser-203. The C2H2-type 1 zinc finger occupies 244-267; it reads LTCEKCPRVFNTRWYLEKHMNVTH. The segment at 271 to 293 adopts a C2H2-type 2; degenerate zinc-finger fold; sequence QICDKCGKKFVLESELSLHQQTD. 6 C2H2-type zinc fingers span residues 298–321, 328–350, 356–378, 384–406, 412–434, and 440–462; these read IQCV…KIVH, FACE…MVAH, FTCE…SLQH, FRCE…MSIH, FMCQ…MKTH, and FICE…RRTH. A C2H2-type 9; degenerate zinc finger spans residues 468 to 491; sequence YPCDVCGQRFRFSNMLKAHKEKCF. A mediates interaction with CBFA2T3 region spans residues 497–608; sequence VNVPPAVQIP…KNSAAPAQHH (112 aa).

Belongs to the krueppel C2H2-type zinc-finger protein family. Interacts with CBFA2T3.

The protein localises to the nucleus. Its function is as follows. Functions as a transcriptional repressor. The sequence is that of Zinc finger protein 652 (Znf652) from Mus musculus (Mouse).